A 129-amino-acid chain; its full sequence is Succinate dehydrogenase subunit 3-1, mitochondrial (129 aa).

The N-terminal 58 residues, 1-58, are a transit peptide targeting the mitochondrion; it reads MEKYHSNSRFAPFRDAPFALRGALGSSGSSFSSIDSLRRSSTLEQARGYTSRPLGAVR. Over residues 25-35 the composition is skewed to low complexity; sequence GSSGSSFSSID. Residues 25 to 80 form a disordered region; sequence GSSGSSFSSIDSLRRSSTLEQARGYTSRPLGAVRPKMLPSGCRPLHTSHPLSAPVA. Histidine 87 contacts heme. The chain crosses the membrane as a helical span at residues 105–127; it reads IFGAALGAAIISIPLATKFSLMF.

Component of complex II composed of eight subunits in plants: four classical SDH subunits SDH1, SDH2, SDH3 and SDH4 (a flavoprotein (FP), an iron-sulfur protein (IP), and a cytochrome b composed of a large and a small subunit.), as well as four subunits unknown in mitochondria from bacteria and heterotrophic eukaryotes. Heme is required as a cofactor.

It localises to the mitochondrion inner membrane. Its pathway is carbohydrate metabolism; tricarboxylic acid cycle. Functionally, membrane-anchoring subunit of succinate dehydrogenase (SDH). The chain is Succinate dehydrogenase subunit 3-1, mitochondrial from Oryza sativa subsp. japonica (Rice).